A 307-amino-acid polypeptide reads, in one-letter code: Myeloid-associated differentiation marker-like protein 2 (307 aa).

MARVEL domains follow at residues 17–154 and 159–303; these read AVTS…ARPG and YMAT…RIRF. A run of 7 helical transmembrane segments spans residues 53-73, 90-110, 129-149, 163-183, 198-218, 232-252, and 278-298; these read FCMA…ACEF, AFAM…PLYF, LAAS…VALT, VSGL…GALV, VAVY…SVMG, IVYT…WPVF, and LVVA…LAYS.

The protein belongs to the MAL family.

The protein localises to the membrane. The sequence is that of Myeloid-associated differentiation marker-like protein 2 (Myadml2) from Mus musculus (Mouse).